A 326-amino-acid polypeptide reads, in one-letter code: Thiazole synthase (326 aa).

The active-site Schiff-base intermediate with DXP is Lys-168. Residues Gly-229, 255–256 (AG), and 277–278 (NT) contribute to the 1-deoxy-D-xylulose 5-phosphate site.

Belongs to the ThiG family. In terms of assembly, homotetramer. Forms heterodimers with either ThiH or ThiS.

It localises to the cytoplasm. The catalysed reaction is [ThiS sulfur-carrier protein]-C-terminal-Gly-aminoethanethioate + 2-iminoacetate + 1-deoxy-D-xylulose 5-phosphate = [ThiS sulfur-carrier protein]-C-terminal Gly-Gly + 2-[(2R,5Z)-2-carboxy-4-methylthiazol-5(2H)-ylidene]ethyl phosphate + 2 H2O + H(+). The protein operates within cofactor biosynthesis; thiamine diphosphate biosynthesis. Functionally, catalyzes the rearrangement of 1-deoxy-D-xylulose 5-phosphate (DXP) to produce the thiazole phosphate moiety of thiamine. Sulfur is provided by the thiocarboxylate moiety of the carrier protein ThiS. In vitro, sulfur can be provided by H(2)S. The protein is Thiazole synthase of Magnetococcus marinus (strain ATCC BAA-1437 / JCM 17883 / MC-1).